The chain runs to 138 residues: Large ribosomal subunit protein uL16 (138 aa).

Basic residues predominate over residues 1-16; the sequence is MLIPRRVKHRKQHHPS. Residues 1–25 are disordered; that stretch reads MLIPRRVKHRKQHHPSRSGAAKGGT.

Belongs to the universal ribosomal protein uL16 family. Part of the 50S ribosomal subunit.

Its function is as follows. Binds 23S rRNA and is also seen to make contacts with the A and possibly P site tRNAs. In Rhodococcus jostii (strain RHA1), this protein is Large ribosomal subunit protein uL16.